Reading from the N-terminus, the 86-residue chain is Small ribosomal subunit protein bS20 (86 aa).

The interval 1–25 (MANIKSQMKRIKTNEANRQRNKAVK) is disordered.

It belongs to the bacterial ribosomal protein bS20 family.

Functionally, binds directly to 16S ribosomal RNA. The polypeptide is Small ribosomal subunit protein bS20 (Saccharopolyspora erythraea (strain ATCC 11635 / DSM 40517 / JCM 4748 / NBRC 13426 / NCIMB 8594 / NRRL 2338)).